The primary structure comprises 577 residues: Arginine--tRNA ligase (577 aa).

Residues 122–132 carry the 'HIGH' region motif; the sequence is PNVAKEMHVGH.

It belongs to the class-I aminoacyl-tRNA synthetase family. As to quaternary structure, monomer.

The protein resides in the cytoplasm. It carries out the reaction tRNA(Arg) + L-arginine + ATP = L-arginyl-tRNA(Arg) + AMP + diphosphate. This Escherichia coli O127:H6 (strain E2348/69 / EPEC) protein is Arginine--tRNA ligase.